Consider the following 407-residue polypeptide: Argininosuccinate synthase (407 aa).

ATP contacts are provided by residues 13–21 and Ala40; that span reads AYSGGLDTS. Tyr91 and Ser96 together coordinate L-citrulline. Position 121 (Gly121) interacts with ATP. Residues Thr123, Asn127, and Asp128 each coordinate L-aspartate. Asn127 is an L-citrulline binding site. Residues Arg131, Ser182, Ser191, Glu267, and Tyr279 each coordinate L-citrulline.

This sequence belongs to the argininosuccinate synthase family. Type 1 subfamily. In terms of assembly, homotetramer.

It localises to the cytoplasm. The catalysed reaction is L-citrulline + L-aspartate + ATP = 2-(N(omega)-L-arginino)succinate + AMP + diphosphate + H(+). It functions in the pathway amino-acid biosynthesis; L-arginine biosynthesis; L-arginine from L-ornithine and carbamoyl phosphate: step 2/3. This chain is Argininosuccinate synthase, found in Rhizobium etli (strain ATCC 51251 / DSM 11541 / JCM 21823 / NBRC 15573 / CFN 42).